A 56-amino-acid chain; its full sequence is Sperm protamine P1 (56 aa).

The interval 1-56 is disordered; it reads RLSRRRVYSIGGRRRRRRRRSRGRRGRRRGRRRGRRRGRRRGRRRRRRRGGRRRRR.

In terms of processing, P2 is phosphorylated in immature sperm. It is dephosphorylated in mature sperm allowing a stronger interaction with DNA. Testis.

The protein resides in the nucleus. Its subcellular location is the chromosome. Protamines substitute for histones in the chromatin of sperm during the haploid phase of spermatogenesis. They compact sperm DNA into a highly condensed, stable and inactive complex. Its function is as follows. Octopus spermiogenesis is characterized by a double nuclear protein transition: Histones are first replaced by P1, which allows the chromatin to adopt a shape that is not as relaxed as with histones. The majority of P1 is later replaced by P2, forming a compact chromatin. P2 is the main protamine of sperm. The polypeptide is Sperm protamine P1 (Octopus vulgaris (Common octopus)).